An 861-amino-acid chain; its full sequence is Probable beta-glucosidase A (861 aa).

An N-terminal signal peptide occupies residues 1-19 (MKLSILEAAALTAASVASA). N62, N212, and N253 each carry an N-linked (GlcNAc...) asparagine glycan. The active site involves D281. N-linked (GlcNAc...) asparagine glycans are attached at residues N316, N323, N355, N524, N543, N565, N669, and N713. Residues 735-754 (PEGATDGSPQPRLPASGGPG) form a disordered region.

Belongs to the glycosyl hydrolase 3 family.

It localises to the secreted. It catalyses the reaction Hydrolysis of terminal, non-reducing beta-D-glucosyl residues with release of beta-D-glucose.. The protein operates within glycan metabolism; cellulose degradation. Its function is as follows. Beta-glucosidases are one of a number of cellulolytic enzymes involved in the degradation of cellulosic biomass. Catalyzes the last step releasing glucose from the inhibitory cellobiose. The protein is Probable beta-glucosidase A (bglA) of Aspergillus terreus.